The primary structure comprises 195 residues: 3-isopropylmalate dehydratase small subunit (195 aa).

Belongs to the LeuD family. LeuD type 1 subfamily. Heterodimer of LeuC and LeuD.

It catalyses the reaction (2R,3S)-3-isopropylmalate = (2S)-2-isopropylmalate. The protein operates within amino-acid biosynthesis; L-leucine biosynthesis; L-leucine from 3-methyl-2-oxobutanoate: step 2/4. Catalyzes the isomerization between 2-isopropylmalate and 3-isopropylmalate, via the formation of 2-isopropylmaleate. The chain is 3-isopropylmalate dehydratase small subunit from Parafrankia sp. (strain EAN1pec).